We begin with the raw amino-acid sequence, 203 residues long: Somatotropin (203 aa).

Residues 1 to 17 form the signal peptide; the sequence is MNRVILLLSVMCVGVSS. The residue at position 18 (Q18) is a Pyrrolidone carboxylic acid. 2 disulfide bridges follow: C68–C176 and C193–C201.

The protein belongs to the somatotropin/prolactin family.

Its subcellular location is the secreted. Growth hormone plays an important role in growth control and is involved in the regulation of several anabolic processes. Implicated as an osmoregulatory substance important for seawater adaptation. This is Somatotropin (gh) from Verasper variegatus (Spotted flounder).